The chain runs to 137 residues: Large ribosomal subunit protein uL16 (137 aa).

The interval 1–20 (MLQPSNRKYRKDFKGRNRGV) is disordered. Basic residues predominate over residues 7-17 (RKYRKDFKGRN).

The protein belongs to the universal ribosomal protein uL16 family. In terms of assembly, part of the 50S ribosomal subunit.

Functionally, binds 23S rRNA and is also seen to make contacts with the A and possibly P site tRNAs. The sequence is that of Large ribosomal subunit protein uL16 from Coxiella burnetii (strain CbuG_Q212) (Coxiella burnetii (strain Q212)).